The primary structure comprises 243 residues: UPF0758 protein SYNPCC7002_A0220 (243 aa).

The 124-residue stretch at isoleucine 112–leucine 235 folds into the MPN domain. Residues histidine 184, histidine 186, and aspartate 197 each contribute to the Zn(2+) site. A JAMM motif motif is present at residues histidine 184–aspartate 197.

Belongs to the UPF0758 family.

The sequence is that of UPF0758 protein SYNPCC7002_A0220 from Picosynechococcus sp. (strain ATCC 27264 / PCC 7002 / PR-6) (Agmenellum quadruplicatum).